Reading from the N-terminus, the 221-residue chain is Thiamine-phosphate synthase (221 aa).

Residues 46–50 (QFREK) and Asn83 each bind 4-amino-2-methyl-5-(diphosphooxymethyl)pyrimidine. The Mg(2+) site is built by Asp84 and Asp103. Ser122 contacts 4-amino-2-methyl-5-(diphosphooxymethyl)pyrimidine. 149-151 (TQS) contacts 2-[(2R,5Z)-2-carboxy-4-methylthiazol-5(2H)-ylidene]ethyl phosphate. Lys152 lines the 4-amino-2-methyl-5-(diphosphooxymethyl)pyrimidine pocket. 2-[(2R,5Z)-2-carboxy-4-methylthiazol-5(2H)-ylidene]ethyl phosphate-binding positions include Gly181 and 201–202 (IS).

The protein belongs to the thiamine-phosphate synthase family. Requires Mg(2+) as cofactor.

The enzyme catalyses 2-[(2R,5Z)-2-carboxy-4-methylthiazol-5(2H)-ylidene]ethyl phosphate + 4-amino-2-methyl-5-(diphosphooxymethyl)pyrimidine + 2 H(+) = thiamine phosphate + CO2 + diphosphate. It carries out the reaction 2-(2-carboxy-4-methylthiazol-5-yl)ethyl phosphate + 4-amino-2-methyl-5-(diphosphooxymethyl)pyrimidine + 2 H(+) = thiamine phosphate + CO2 + diphosphate. It catalyses the reaction 4-methyl-5-(2-phosphooxyethyl)-thiazole + 4-amino-2-methyl-5-(diphosphooxymethyl)pyrimidine + H(+) = thiamine phosphate + diphosphate. The protein operates within cofactor biosynthesis; thiamine diphosphate biosynthesis; thiamine phosphate from 4-amino-2-methyl-5-diphosphomethylpyrimidine and 4-methyl-5-(2-phosphoethyl)-thiazole: step 1/1. Its function is as follows. Condenses 4-methyl-5-(beta-hydroxyethyl)thiazole monophosphate (THZ-P) and 2-methyl-4-amino-5-hydroxymethyl pyrimidine pyrophosphate (HMP-PP) to form thiamine monophosphate (TMP). This Actinobacillus succinogenes (strain ATCC 55618 / DSM 22257 / CCUG 43843 / 130Z) protein is Thiamine-phosphate synthase.